The chain runs to 589 residues: Class I diterpene synthase 2, chloroplastic (589 aa).

Mg(2+) is bound by residues Asp-328, Asp-332, Asn-472, Thr-476, and Glu-480. The DDXXD motif signature appears at 328–332 (DDFFD).

This sequence belongs to the terpene synthase family. Requires Mg(2+) as cofactor. In terms of tissue distribution, mostly expressed in trichomes of leaves and fruits.

It localises to the plastid. The protein resides in the chloroplast. The enzyme catalyses 9alpha-copalyl diphosphate + H2O = (13S)-vitexifolin A + diphosphate. It carries out the reaction peregrinol diphosphate = (13R)-9,13-epoxylabd-14-ene + diphosphate. It catalyses the reaction peregrinol diphosphate + H2O = viteagnusin D + diphosphate. Its pathway is secondary metabolite biosynthesis; terpenoid biosynthesis. Functionally, involved in the biosynthesis of labdane-type diterpenoid including cleroda-dienols, and peregrinol lactones and furan derivatives, dopaminergic diterpenoids that can bind to dopamine receptors in the human pituitary gland, have probably ability to lower prolactin levels, and are used to treat menstrual cycle disorders (e.g. premenstrual syndrome and mastodynia). Terpene synthase the catalyzes the conversion of peregrinol diphosphate to viteagnusin D and 9,13(R)-epoxy-labd-14-ene, and of syn-copalyl diphosophate to vitexifolin A. The polypeptide is Class I diterpene synthase 2, chloroplastic (Vitex agnus-castus (Chaste tree)).